The sequence spans 313 residues: Formimidoylglutamase (313 aa).

The Mn(2+) site is built by histidine 130, aspartate 155, histidine 157, aspartate 159, aspartate 241, and aspartate 243.

Belongs to the arginase family. The cofactor is Mn(2+).

The enzyme catalyses N-formimidoyl-L-glutamate + H2O = formamide + L-glutamate. It functions in the pathway amino-acid degradation; L-histidine degradation into L-glutamate; L-glutamate from N-formimidoyl-L-glutamate (hydrolase route): step 1/1. Functionally, catalyzes the conversion of N-formimidoyl-L-glutamate to L-glutamate and formamide. The protein is Formimidoylglutamase of Salmonella newport (strain SL254).